Consider the following 310-residue polypeptide: MDLVNHLEDRLLFAVPKKGRLYESCVNVLKGSDIKFRRNPRLDIALVQNLPIALVFLPAADIPRFVGTGRVHLGITGQDQIAEARLRIGDKLKIEELVDLQFGGCKLQVQVPESGDITSVDQLVGRRIVTSFEYLVAEYFDKVEKKAKSEGKVDSGIKTEISFVSGSVEASCALGIADAVVDLVESGETMRASGLKPIETVMSTSAVLVRSSNCSSELEPLLQTIITRIRGYIIAQQYVLVNYNVNREHLPVVLKITPGKRAPTITTLDEPGWVAVSSMVVKKEVAQVMDKLSQNHAHDILVLSIDNSRP.

This sequence belongs to the ATP phosphoribosyltransferase family.

It is found in the cytoplasm. The catalysed reaction is 1-(5-phospho-beta-D-ribosyl)-ATP + diphosphate = 5-phospho-alpha-D-ribose 1-diphosphate + ATP. Its pathway is amino-acid biosynthesis; L-histidine biosynthesis; L-histidine from 5-phospho-alpha-D-ribose 1-diphosphate: step 1/9. Catalyzes the condensation of ATP and 5-phosphoribose 1-diphosphate to form N'-(5'-phosphoribosyl)-ATP (PR-ATP). Has a crucial role in the pathway because the rate of histidine biosynthesis seems to be controlled primarily by regulation of HisG enzymatic activity. The sequence is that of ATP phosphoribosyltransferase (his1) from Schizosaccharomyces pombe (strain 972 / ATCC 24843) (Fission yeast).